The following is a 214-amino-acid chain: Small ribosomal subunit protein uS5 (214 aa).

Residues 54-117 enclose the S5 DRBM domain; the sequence is LRYDIVDIGI…RDAKMRIIPV (64 aa).

It belongs to the universal ribosomal protein uS5 family. As to quaternary structure, part of the 30S ribosomal subunit. Contacts protein S4.

Its function is as follows. With S4 and S12 plays an important role in translational accuracy. The sequence is that of Small ribosomal subunit protein uS5 from Sulfolobus acidocaldarius (strain ATCC 33909 / DSM 639 / JCM 8929 / NBRC 15157 / NCIMB 11770).